A 503-amino-acid chain; its full sequence is Xylan O-acetyltransferase 12 (503 aa).

The Cytoplasmic portion of the chain corresponds to 1-54 (MWSALFSHLREVHKRSGVKEEKLIMKSPAAAGEAAGCHKPQATATNKMTVLQSP). The chain crosses the membrane as a helical; Signal-anchor for type II membrane protein span at residues 55–77 (LGLRTILTSLVAFFIVVSSVSLL). At 78 to 503 (FDRSQDAQAQ…EFLYAYLMHK (426 aa)) the chain is on the lumenal side. Intrachain disulfides connect Cys-153–Cys-204, Cys-175–Cys-240, Cys-184–Cys-484, and Cys-400–Cys-480. N-linked (GlcNAc...) asparagine glycosylation is found at Asn-154, Asn-164, Asn-190, and Asn-210. The GDS motif motif lies at 227 to 229 (GDS). Ser-229 functions as the Nucleophile in the catalytic mechanism. N-linked (GlcNAc...) asparagine glycans are attached at residues Asn-256, Asn-268, Asn-373, Asn-402, and Asn-443. Asp-479 (proton donor) is an active-site residue. The DXXH motif signature appears at 479 to 482 (DCTH). The Proton acceptor role is filled by His-482.

Belongs to the PC-esterase family. TBL subfamily.

The protein resides in the golgi apparatus membrane. Functionally, xylan acetyltransferase required for 2-O- and 3-O-monoacetylation of xylosyl residues in xylan. Catalyzes the 2-O-acetylation of xylan, followed by nonenzymatic acetyl migration to the O-3 position, resulting in products that are monoacetylated at both O-2 and O-3 positions. This chain is Xylan O-acetyltransferase 12, found in Oryza sativa subsp. japonica (Rice).